Reading from the N-terminus, the 373-residue chain is Probable protein phosphatase 2C 73 (373 aa).

In terms of domain architecture, PPM-type phosphatase spans 61–354 (LASLFSKRGE…DDMSVVCLFL (294 aa)). Positions 97, 98, 299, and 345 each coordinate Mn(2+).

This sequence belongs to the PP2C family. Mg(2+) is required as a cofactor. The cofactor is Mn(2+).

It carries out the reaction O-phospho-L-seryl-[protein] + H2O = L-seryl-[protein] + phosphate. The enzyme catalyses O-phospho-L-threonyl-[protein] + H2O = L-threonyl-[protein] + phosphate. This Arabidopsis thaliana (Mouse-ear cress) protein is Probable protein phosphatase 2C 73 (PPC6-7).